Reading from the N-terminus, the 464-residue chain is Interstitial collagenase A (464 aa).

The signal sequence occupies residues 1–17 (MPSLPLLLLLWAASSYS). The propeptide at 18–96 (FPVFHNGDRQ…PRCGVPDVAP (79 aa)) is activation peptide. Positions 87 to 94 (PRCGVPDV) match the Cysteine switch motif. Residue Cys-89 coordinates Zn(2+). Residues 95–274 (APYAITHNNP…IQPTGATTPH (180 aa)) are metalloprotease. Ca(2+) is bound at residue Asp-155. Residues His-165 and Asp-167 each coordinate Zn(2+). Residues Asp-172 and Gly-173 each contribute to the Ca(2+) site. Position 180 (His-180) interacts with Zn(2+). Ca(2+)-binding residues include Gly-187, Gly-189, and Asp-191. Position 193 (His-193) interacts with Zn(2+). Ca(2+) contacts are provided by Asp-195 and Glu-198. Asn-202 carries N-linked (GlcNAc...) asparagine glycosylation. His-215 serves as a coordination point for Zn(2+). Glu-216 is an active-site residue. 2 residues coordinate Zn(2+): His-219 and His-225. 2 Hemopexin repeats span residues 273-322 (PHPC…WPNL) and 323-369 (PVKL…FGFP). Cys-276 and Cys-464 form a disulfide bridge. Asp-283 serves as a coordination point for Ca(2+). A glycan (N-linked (GlcNAc...) asparagine) is linked at Asn-371. 2 Hemopexin repeats span residues 372–420 (VTHI…FPGI) and 421–464 (DDKV…WFNC). Asp-376 and Asp-425 together coordinate Ca(2+).

It belongs to the peptidase M10A family. It depends on Ca(2+) as a cofactor. Zn(2+) is required as a cofactor.

The protein localises to the secreted. The protein resides in the extracellular space. It is found in the extracellular matrix. It catalyses the reaction Cleavage of the triple helix of collagen at about three-quarters of the length of the molecule from the N-terminus, at 775-Gly-|-Ile-776 in the alpha1(I) chain. Cleaves synthetic substrates and alpha-macroglobulins at bonds where P1' is a hydrophobic residue.. Its activity is regulated as follows. Can be activated without removal of the activation peptide. In terms of biological role, cleaves collagens of types I, II, and III at one site in the helical domain. Also cleaves collagens of types VII and X. Able to degrade synthetic peptides and type I and II fibrillar collagen. The sequence is that of Interstitial collagenase A (Mmp1a) from Mus musculus (Mouse).